The sequence spans 510 residues: MIWHVQNENFILDSTRIFMKAFHLLLFHGSFIFPECILIFGLILLLMIDSTSDQKDRPWFYFISSTSLVMSITALLFRWKEEPIISFSGNFQTNNFNEIFQFLILLCSTLCIPLSVEYIECTEMAITEFLLFVLTATLGGMFLCGANDLITIFVAPECFSLCSYLLSGYTKRDVRSNEATTKYLLMGGASSSILVHGFSWLYGSSGGEIELQEIVNGLINTQMYNSPGISIALISITVGIGFKLSPAPFHQWTPDVYEGSPTPVVAFLSVTSKVAASASATRIFDIPFYFSSNEWHLLLEILAILSMILGNLIAITQTSMKRMLAYSSIGQIGYVIIGIIVGDSNDGYASMITYMLFYISMNLGTFACIVSFGLRTGTDNIRDYAGLYTKDPFLALSLALCLLSLGGLPPLAGFFGKLYLFWCGWQAGLYFLVSMGLLTSVVSIYYYLKIIKLLMTGRNQEITPHVRNYRRSTLRSNNSIEWSMTVCVIASTIPGISMNPILAIAQDTLF.

The next 13 helical transmembrane spans lie at 24-44 (LLLFHGSFIFPECILIFGLIL), 59-79 (WFYFISSTSLVMSITALLFRW), 99-119 (IFQFLILLCSTLCIPLSVEYI), 124-144 (MAITEFLLFVLTATLGGMFLC), 149-169 (LITIFVAPECFSLCSYLLSGY), 183-203 (YLLMGGASSSILVHGFSWLYG), 229-249 (ISIALISITVGIGFKLSPAPF), 295-315 (WHLLLEILAILSMILGNLIAI), 323-343 (MLAYSSIGQIGYVIIGIIVGD), 354-374 (YMLFYISMNLGTFACIVSFGL), 395-415 (ALSLALCLLSLGGLPPLAGFF), 418-438 (LYLFWCGWQAGLYFLVSMGLL), and 484-504 (MTVCVIASTIPGISMNPILAI).

This sequence belongs to the complex I subunit 2 family. As to quaternary structure, NDH is composed of at least 16 different subunits, 5 of which are encoded in the nucleus.

The protein localises to the plastid. It localises to the chloroplast thylakoid membrane. The enzyme catalyses a plastoquinone + NADH + (n+1) H(+)(in) = a plastoquinol + NAD(+) + n H(+)(out). The catalysed reaction is a plastoquinone + NADPH + (n+1) H(+)(in) = a plastoquinol + NADP(+) + n H(+)(out). NDH shuttles electrons from NAD(P)H:plastoquinone, via FMN and iron-sulfur (Fe-S) centers, to quinones in the photosynthetic chain and possibly in a chloroplast respiratory chain. The immediate electron acceptor for the enzyme in this species is believed to be plastoquinone. Couples the redox reaction to proton translocation, and thus conserves the redox energy in a proton gradient. The protein is NAD(P)H-quinone oxidoreductase subunit 2, chloroplastic of Sisyrinchium montanum (Strict blue-eyed grass).